Here is a 383-residue protein sequence, read N- to C-terminus: Serine protease 23 (383 aa).

The N-terminal stretch at 1–19 (MAGIPGLLFLLFFLLCAVG) is a signal peptide. Asn93 is a glycosylation site (N-linked (GlcNAc...) asparagine). Ser109 is subject to Phosphoserine; by FAM20C. A disulfide bridge links Cys160 with Cys176. His175 serves as the catalytic Charge relay system. The N-linked (GlcNAc...) asparagine glycan is linked to Asn207. Active-site charge relay system residues include Asp240 and Ser316.

Belongs to the peptidase S1 family.

The protein resides in the secreted. The protein is Serine protease 23 (PRSS23) of Homo sapiens (Human).